The chain runs to 387 residues: Galanin receptor type 2 (387 aa).

Topologically, residues 1 to 28 (MNVSGCPGAGNASQAGGGGGWHPEAVIV) are extracellular. N-linked (GlcNAc...) asparagine glycans are attached at residues N2 and N11. Residues 29 to 49 (PLLFALIFLVGTVGNTLVLAV) form a helical membrane-spanning segment. At 50–60 (LLRGGQAVSTT) the chain is on the cytoplasmic side. Residues 61-81 (NLFILNLGVADLCFILCCVPF) traverse the membrane as a helical segment. Topologically, residues 82 to 99 (QATIYTLDGWVFGSLLCK) are extracellular. A disulfide bridge connects residues C98 and C175. Residues 100–121 (AVHFLIFLTMHASSFTLAAVSL) form a helical membrane-spanning segment. Over 122-141 (DRYLAIRYPLHSRELRTPRN) the chain is Cytoplasmic. Residues 142–162 (ALAAIGLIWGLSLLFSGPYLS) traverse the membrane as a helical segment. At 163 to 187 (YYRQSQLANLTVCHPAWSAPRRRAM) the chain is on the extracellular side. A helical transmembrane segment spans residues 188–208 (DICTFVFSYLLPVLVLGLTYA). Residues 209–237 (RTLRYLWRAVDPVAAGSGARRAKRKVTRM) lie on the Cytoplasmic side of the membrane. A helical transmembrane segment spans residues 238–258 (ILIVAALFCLCWMPHHALILC). At 259–260 (VW) the chain is on the extracellular side. Residues 261–281 (FGQFPLTRATYALRILSHLVS) form a helical membrane-spanning segment. At 282–387 (YANSCVNPIV…GDSILTVDVA (106 aa)) the chain is on the cytoplasmic side.

Belongs to the G-protein coupled receptor 1 family. Expressed abundantly within the central nervous system in both hypothalamus and hippocampus. In peripheral tissues, the strongest expression was observed in heart, kidney, liver, and small intestine.

It is found in the cell membrane. Receptor for the hormone galanin and GALP. Receptor for the hormone spexin-1. The activity of this receptor is mediated by G proteins that activate the phospholipase C/protein kinase C pathway (via G(q)) and that inhibit adenylyl cyclase (via G(i)). The chain is Galanin receptor type 2 (GALR2) from Homo sapiens (Human).